Consider the following 425-residue polypeptide: Glutamyl-tRNA reductase (425 aa).

Substrate is bound by residues 49–52 (TCNR), Ser-107, 112–114 (EPQ), and Gln-118. Cys-50 serves as the catalytic Nucleophile. Residue 187-192 (GAGETI) coordinates NADP(+).

The protein belongs to the glutamyl-tRNA reductase family. Homodimer.

The catalysed reaction is (S)-4-amino-5-oxopentanoate + tRNA(Glu) + NADP(+) = L-glutamyl-tRNA(Glu) + NADPH + H(+). It participates in porphyrin-containing compound metabolism; protoporphyrin-IX biosynthesis; 5-aminolevulinate from L-glutamyl-tRNA(Glu): step 1/2. In terms of biological role, catalyzes the NADPH-dependent reduction of glutamyl-tRNA(Glu) to glutamate 1-semialdehyde (GSA). The sequence is that of Glutamyl-tRNA reductase from Pseudomonas syringae pv. syringae (strain B728a).